The primary structure comprises 1575 residues: Laminin subunit gamma-3 (1575 aa).

A signal peptide spans Met1–Gly19. The region spanning Arg31–Arg270 is the Laminin N-terminal domain. N-linked (GlcNAc...) asparagine glycans are attached at residues Asn87 and Asn119. Intrachain disulfides connect Cys271–Cys280, Cys273–Cys290, Cys292–Cys301, Cys304–Cys324, Cys327–Cys336, Cys329–Cys352, Cys355–Cys364, Cys367–Cys380, Cys383–Cys395, Cys385–Cys401, Cys403–Cys412, Cys415–Cys427, Cys430–Cys441, Cys432–Cys448, Cys450–Cys459, and Cys462–Cys477. 4 consecutive Laminin EGF-like domains span residues Cys271 to Pro326, Cys327 to Pro382, Cys383 to Pro429, and Cys430 to Ser479. N-linked (GlcNAc...) asparagine glycosylation occurs at Asn295. The N-linked (GlcNAc...) asparagine glycan is linked to Asn328. Residues Cys480–Cys489 enclose the Laminin EGF-like 5; first part domain. One can recognise a Laminin IV type A domain in the interval His499 to Ile672. Asn631 carries N-linked (GlcNAc...) asparagine glycosylation. The Laminin EGF-like 5; second part domain occupies Cys673–Pro706. 24 disulfide bridges follow: Cys707-Cys715, Cys709-Cys722, Cys724-Cys733, Cys736-Cys752, Cys755-Cys763, Cys757-Cys774, Cys777-Cys786, Cys789-Cys807, Cys810-Cys824, Cys812-Cys831, Cys834-Cys843, Cys846-Cys863, Cys866-Cys880, Cys868-Cys887, Cys889-Cys898, Cys901-Cys914, Cys917-Cys929, Cys919-Cys936, Cys938-Cys947, Cys950-Cys962, Cys965-Cys977, Cys967-Cys983, Cys985-Cys994, and Cys997-Cys1010. 6 consecutive Laminin EGF-like domains span residues Cys707–Pro754, Cys755–Gln809, Cys810–Pro865, Cys866–Ser916, Cys917–Ala964, and Cys965–Cys1013. Asn837 carries an N-linked (GlcNAc...) asparagine glycan. A glycan (N-linked (GlcNAc...) asparagine) is linked at Asn980. The segment at Pro1014–Gln1575 is domain II and I. Residues Arg1059 to Asp1061 carry the Cell attachment site motif. Residues Arg1073–Ala1134 adopt a coiled-coil conformation. Residue Asn1185 is glycosylated (N-linked (GlcNAc...) asparagine). Residues Leu1201–Val1228 are a coiled coil. A disordered region spans residues Lys1378–Arg1399. 2 coiled-coil regions span residues Lys1410–Leu1492 and Gly1523–Leu1567.

In terms of assembly, laminin is a complex glycoprotein, consisting of three different polypeptide chains (alpha, beta, gamma), which are bound to each other by disulfide bonds into a cross-shaped molecule comprising one long and three short arms with globules at each end. Gamma-3 is a subunit of laminin-12 (laminin-213), laminin-14 (laminin-423) and laminin-15 (laminin-523). In terms of tissue distribution, broadly expressed in: skin, heart, lung, and the reproductive tracts.

The protein localises to the secreted. Its subcellular location is the extracellular space. It localises to the extracellular matrix. It is found in the basement membrane. Its function is as follows. Binding to cells via a high affinity receptor, laminin is thought to mediate the attachment, migration and organization of cells into tissues during embryonic development by interacting with other extracellular matrix components. In Homo sapiens (Human), this protein is Laminin subunit gamma-3 (LAMC3).